Reading from the N-terminus, the 93-residue chain is Acylphosphatase (93 aa).

Residues 7–93 (RAHVFVSGTV…EGIDGFHIRR (87 aa)) enclose the Acylphosphatase-like domain. Residues Arg-22 and Asn-40 contribute to the active site.

Belongs to the acylphosphatase family.

The catalysed reaction is an acyl phosphate + H2O = a carboxylate + phosphate + H(+). This is Acylphosphatase (acyP) from Haloquadratum walsbyi (strain DSM 16790 / HBSQ001).